A 154-amino-acid chain; its full sequence is 6,7-dimethyl-8-ribityllumazine synthase (154 aa).

5-amino-6-(D-ribitylamino)uracil contacts are provided by residues Phe-22, Ala-56–Glu-58, and Ala-80–Ile-82. Ala-85 to Thr-86 is a binding site for (2S)-2-hydroxy-3-oxobutyl phosphate. The active-site Proton donor is the His-88. Position 113 (Phe-113) interacts with 5-amino-6-(D-ribitylamino)uracil. Arg-127 lines the (2S)-2-hydroxy-3-oxobutyl phosphate pocket.

This sequence belongs to the DMRL synthase family.

The catalysed reaction is (2S)-2-hydroxy-3-oxobutyl phosphate + 5-amino-6-(D-ribitylamino)uracil = 6,7-dimethyl-8-(1-D-ribityl)lumazine + phosphate + 2 H2O + H(+). The protein operates within cofactor biosynthesis; riboflavin biosynthesis; riboflavin from 2-hydroxy-3-oxobutyl phosphate and 5-amino-6-(D-ribitylamino)uracil: step 1/2. Functionally, catalyzes the formation of 6,7-dimethyl-8-ribityllumazine by condensation of 5-amino-6-(D-ribitylamino)uracil with 3,4-dihydroxy-2-butanone 4-phosphate. This is the penultimate step in the biosynthesis of riboflavin. In Desulfitobacterium hafniense (strain DSM 10664 / DCB-2), this protein is 6,7-dimethyl-8-ribityllumazine synthase.